A 49-amino-acid polypeptide reads, in one-letter code: Toxic protein HokB (49 aa).

Residues 4–24 (NPLVVCLLIICITILTFTLLT) traverse the membrane as a helical segment.

The protein belongs to the Hok/Gef family.

It is found in the cell inner membrane. In terms of biological role, toxic component of a type I toxin-antitoxin (TA) system. When overexpressed kills cells within minutes; causes collapse of the transmembrane potential and arrest of respiration. Expression leads to membrane depolarization; when protein levels are high enough depolarization probably leads to lowered metabolic activity which in turn induces some cells to enter the persistent state in which they transiently survive antibiotic exposure. Its toxic effect is probably neutralized by antisense antitoxin RNA SokB, which is encoded in trans on the opposite DNA strand. The chain is Toxic protein HokB from Escherichia coli (strain K12).